The chain runs to 202 residues: Small ribosomal subunit protein uS4c (202 aa).

The S4 RNA-binding domain occupies 90–153; it reads MRLDNIIFRL…KSEAIISKNI (64 aa).

This sequence belongs to the universal ribosomal protein uS4 family. In terms of assembly, part of the 30S ribosomal subunit. Contacts protein S5. The interaction surface between S4 and S5 is involved in control of translational fidelity.

It localises to the plastid. The protein resides in the chloroplast. Functionally, one of the primary rRNA binding proteins, it binds directly to 16S rRNA where it nucleates assembly of the body of the 30S subunit. With S5 and S12 plays an important role in translational accuracy. This Leucodon sciuroides (Moss) protein is Small ribosomal subunit protein uS4c (rps4).